A 178-amino-acid polypeptide reads, in one-letter code: Large ribosomal subunit protein uL6 (178 aa).

It belongs to the universal ribosomal protein uL6 family. In terms of assembly, part of the 50S ribosomal subunit.

In terms of biological role, this protein binds to the 23S rRNA, and is important in its secondary structure. It is located near the subunit interface in the base of the L7/L12 stalk, and near the tRNA binding site of the peptidyltransferase center. The polypeptide is Large ribosomal subunit protein uL6 (Francisella tularensis subsp. novicida (strain U112)).